A 338-amino-acid chain; its full sequence is Holliday junction branch migration complex subunit RuvB (338 aa).

Residues 1 to 181 (MEERILTQNF…FGVINRLDYY (181 aa)) form a large ATPase domain (RuvB-L) region. ATP is bound by residues Leu20, Arg21, Gly62, Lys65, Thr66, Thr67, 128–130 (EDF), Arg171, Tyr181, and Arg218. Thr66 contributes to the Mg(2+) binding site. A small ATPAse domain (RuvB-S) region spans residues 182–252 (SVEELKEIIK…TANIALNMLG (71 aa)). The segment at 255–338 (EMGLEEIDRK…YVEQRRIEDV (84 aa)) is head domain (RuvB-H). The DNA site is built by Arg310 and Arg315.

It belongs to the RuvB family. In terms of assembly, homohexamer. Forms an RuvA(8)-RuvB(12)-Holliday junction (HJ) complex. HJ DNA is sandwiched between 2 RuvA tetramers; dsDNA enters through RuvA and exits via RuvB. An RuvB hexamer assembles on each DNA strand where it exits the tetramer. Each RuvB hexamer is contacted by two RuvA subunits (via domain III) on 2 adjacent RuvB subunits; this complex drives branch migration. In the full resolvosome a probable DNA-RuvA(4)-RuvB(12)-RuvC(2) complex forms which resolves the HJ.

It localises to the cytoplasm. The catalysed reaction is ATP + H2O = ADP + phosphate + H(+). In terms of biological role, the RuvA-RuvB-RuvC complex processes Holliday junction (HJ) DNA during genetic recombination and DNA repair, while the RuvA-RuvB complex plays an important role in the rescue of blocked DNA replication forks via replication fork reversal (RFR). RuvA specifically binds to HJ cruciform DNA, conferring on it an open structure. The RuvB hexamer acts as an ATP-dependent pump, pulling dsDNA into and through the RuvAB complex. RuvB forms 2 homohexamers on either side of HJ DNA bound by 1 or 2 RuvA tetramers; 4 subunits per hexamer contact DNA at a time. Coordinated motions by a converter formed by DNA-disengaged RuvB subunits stimulates ATP hydrolysis and nucleotide exchange. Immobilization of the converter enables RuvB to convert the ATP-contained energy into a lever motion, pulling 2 nucleotides of DNA out of the RuvA tetramer per ATP hydrolyzed, thus driving DNA branch migration. The RuvB motors rotate together with the DNA substrate, which together with the progressing nucleotide cycle form the mechanistic basis for DNA recombination by continuous HJ branch migration. Branch migration allows RuvC to scan DNA until it finds its consensus sequence, where it cleaves and resolves cruciform DNA. In Caldanaerobacter subterraneus subsp. tengcongensis (strain DSM 15242 / JCM 11007 / NBRC 100824 / MB4) (Thermoanaerobacter tengcongensis), this protein is Holliday junction branch migration complex subunit RuvB.